The sequence spans 49 residues: Large ribosomal subunit protein bL33D (49 aa).

This sequence belongs to the bacterial ribosomal protein bL33 family.

This is Large ribosomal subunit protein bL33D (rpmG4) from Enterococcus faecalis (strain ATCC 700802 / V583).